The primary structure comprises 206 residues: Transmembrane emp24 domain-containing protein bai (206 aa).

Positions 1–20 are cleaved as a signal peptide; it reads MLKSLLCILLIFGCLCRIHG. Residues 21–172 are Lumenal-facing; sequence VMFHLTPNTQ…RDTNEKTNSR (152 aa). Residues 30–140 form the GOLD domain; that stretch reads QKCLKEDIQA…LKPLEVDLKR (111 aa). The chain crosses the membrane as a helical span at residues 173 to 193; the sequence is VLFFSIFSMCCLLGLATWQVL. The Cytoplasmic portion of the chain corresponds to 194 to 206; sequence YLRRYFKAKKLIE.

It belongs to the EMP24/GP25L family.

Its subcellular location is the membrane. Functionally, eca and bai are essential, though not redundant, for dorsoventral patterning of the embryo. Specifically required during early embryogenesis for the activity of maternal tkv, while the zygotic tkv is not affected. The chain is Transmembrane emp24 domain-containing protein bai from Drosophila grimshawi (Hawaiian fruit fly).